Consider the following 569-residue polypeptide: MRASGFFISTLKEAPAEAELISHKLMLRAGIIRRLGSGLYTWMPLGLKVLRKVENIVREEMDAAGALELLMPAVQPAELWRETGRWDVFGPQMLKIRDRHERDFCFGPTHEEVITDIARREIKSYRQLPLNFYQIQTKFRDEVRPRFGVMRAREFVMKDAYSFHTDIPSLEETYQAMHVAYCRIFDRLGLKFRPVKADTGAIGGSSSHEFHVLADSGEDAIAFCSDSDYAANVEMAESLPPAGLREAAAGEMQKVRTIAQKTCEEVAAYLNVSIEQTVKTLAVMANGGMHLLLLRGDHHLNETKVRKIPFLSDFRLASEEEIRTETGCLPGFIGPAGLSLPVIADLTVATMSNFVCGANEEDYHLVNVNFGRDLKEPDHVFDIRNVVSGDLSPDGKGKLEICRGIEVGHIFQLLTKYSEAMKANYLDESGQARPMEMGCYGIGVSRIVAAAIEQNHDERGIIFPAAMAPFQVVIIPIGLKKNAEVRAEAEKLYATLSSVGIEVLLDDRDDRPGVMFADMELIGIPHRVVVGERGLKEGNAEYRGRRDEKSEVVPLPEIADFIKSKLAGG.

It belongs to the class-II aminoacyl-tRNA synthetase family. ProS type 1 subfamily. In terms of assembly, homodimer.

It is found in the cytoplasm. It carries out the reaction tRNA(Pro) + L-proline + ATP = L-prolyl-tRNA(Pro) + AMP + diphosphate. In terms of biological role, catalyzes the attachment of proline to tRNA(Pro) in a two-step reaction: proline is first activated by ATP to form Pro-AMP and then transferred to the acceptor end of tRNA(Pro). As ProRS can inadvertently accommodate and process non-cognate amino acids such as alanine and cysteine, to avoid such errors it has two additional distinct editing activities against alanine. One activity is designated as 'pretransfer' editing and involves the tRNA(Pro)-independent hydrolysis of activated Ala-AMP. The other activity is designated 'posttransfer' editing and involves deacylation of mischarged Ala-tRNA(Pro). The misacylated Cys-tRNA(Pro) is not edited by ProRS. The chain is Proline--tRNA ligase from Nitrosospira multiformis (strain ATCC 25196 / NCIMB 11849 / C 71).